Consider the following 186-residue polypeptide: MELNEIYEYARDHMQKSLDVLKKDFNTLRTGRVTTAVVENIKVDYYGAPTPLNQAASVVAADATTIVISPWDKSLLGEIERAIQEANIGVNPNNDGDQIKLFFPPMTVEQREAEAKKAKQFGEKAKIAIRNVRRDANDKIKKLFKDKAITEDEEKRGLEEVQKITDEFIKKVDDLVKQKEQEIMKV.

The protein belongs to the RRF family.

It is found in the cytoplasm. Functionally, responsible for the release of ribosomes from messenger RNA at the termination of protein biosynthesis. May increase the efficiency of translation by recycling ribosomes from one round of translation to another. The chain is Ribosome-recycling factor from Nitratiruptor sp. (strain SB155-2).